The following is a 425-amino-acid chain: MVILLQFYKEENFKKTEIGEIPEDWEVRELKDILEVIRNGLTAKQNKDKIGYPITRIETISDSKIDITKLGYVEDIKQEDIAKYRLIIGDILFSHINSEEHIGKVAIYEGKPEFLLHGMNLLLLRPNKNKIEPYYLLYLLRHFKQKNIFKYIAKRAVNQSSINQTQLKHLKIPLPPLEEQKQIAKILSDFDNLIGTINKQIEVLNKAKKGMMKKLFTKGVFEHKSFKKSEIGEIPEDWEVVELGNEKYFKIIMGQSPPSSSYNKEGEGVPFLQGKAEFGNIYPNPVLYTNKPLKVVDDEDILISVRAPVGDVNIAPFKLCIGRGLAGIKSNKEKVDNFFVFYYLSYIKPKIEYLGGGAVFKAITKKDLESIKIPLPPLEEQKAIAKRLKAIDDLIEIKRKEKEQIEKAKKKIMNLLLTGKIRVKT.

This sequence belongs to the type-I restriction system S methylase family.

A putative specificity (S) subunit of a type I restriction enzyme thought to recognize 5'-TAGN(6)TGC-3'; the other subunits are unknown. The sequence is that of Putative type I restriction enzyme MjaX specificity subunit from Methanocaldococcus jannaschii (strain ATCC 43067 / DSM 2661 / JAL-1 / JCM 10045 / NBRC 100440) (Methanococcus jannaschii).